Here is a 128-residue protein sequence, read N- to C-terminus: MLTFAPLNFLAIGVGATLGAWLRWVLGLRLNGAGWPWGTLTANLVGGYLIGVMVALIASHPEWPAWIRLAAVTGFLGGLTTFSTFSAETVDMLERGVYATAAAYAGASLAGSLAMTGLGLATVRLLLR.

Transmembrane regions (helical) follow at residues 2-22, 37-57, 65-85, and 101-121; these read LTFA…GAWL, WGTL…VALI, AWIR…FSTF, and AAAY…LGLA. Na(+) contacts are provided by G77 and T80.

The protein belongs to the fluoride channel Fluc/FEX (TC 1.A.43) family.

The protein localises to the cell inner membrane. It catalyses the reaction fluoride(in) = fluoride(out). Its activity is regulated as follows. Na(+) is not transported, but it plays an essential structural role and its presence is essential for fluoride channel function. Its function is as follows. Fluoride-specific ion channel. Important for reducing fluoride concentration in the cell, thus reducing its toxicity. This chain is Fluoride-specific ion channel FluC, found in Bordetella bronchiseptica (strain ATCC BAA-588 / NCTC 13252 / RB50) (Alcaligenes bronchisepticus).